Consider the following 271-residue polypeptide: NADH-quinone oxidoreductase subunit B (271 aa).

Cys37, Cys38, Cys103, and Cys132 together coordinate [4Fe-4S] cluster. The disordered stretch occupies residues 227-271; sequence LAPPSVFGRAKRIPVDPKPSDEARAHGPGPTTESIGDVDGPDRGI. The span at 239 to 251 shows a compositional bias: basic and acidic residues; sequence IPVDPKPSDEARA.

Belongs to the complex I 20 kDa subunit family. In terms of assembly, NDH-1 is composed of 14 different subunits. Subunits NuoB, C, D, E, F, and G constitute the peripheral sector of the complex. [4Fe-4S] cluster serves as cofactor.

It is found in the cell membrane. It carries out the reaction a quinone + NADH + 5 H(+)(in) = a quinol + NAD(+) + 4 H(+)(out). NDH-1 shuttles electrons from NADH, via FMN and iron-sulfur (Fe-S) centers, to quinones in the respiratory chain. The immediate electron acceptor for the enzyme in this species is believed to be a menaquinone. Couples the redox reaction to proton translocation (for every two electrons transferred, four hydrogen ions are translocated across the cytoplasmic membrane), and thus conserves the redox energy in a proton gradient. The chain is NADH-quinone oxidoreductase subunit B from Frankia casuarinae (strain DSM 45818 / CECT 9043 / HFP020203 / CcI3).